A 289-amino-acid chain; its full sequence is Shikimate dehydrogenase (NADP(+)) (289 aa).

Shikimate is bound by residues 22-24 (SRS) and T69. Residue K73 is the Proton acceptor of the active site. E85 contributes to the NADP(+) binding site. N94 and D109 together coordinate shikimate. NADP(+) is bound by residues 134–138 (GAGGA), 158–163 (NRTLSR), and I226. Y228 is a binding site for shikimate. Residue G249 participates in NADP(+) binding.

This sequence belongs to the shikimate dehydrogenase family. Homodimer.

It carries out the reaction shikimate + NADP(+) = 3-dehydroshikimate + NADPH + H(+). The protein operates within metabolic intermediate biosynthesis; chorismate biosynthesis; chorismate from D-erythrose 4-phosphate and phosphoenolpyruvate: step 4/7. Its function is as follows. Involved in the biosynthesis of the chorismate, which leads to the biosynthesis of aromatic amino acids. Catalyzes the reversible NADPH linked reduction of 3-dehydroshikimate (DHSA) to yield shikimate (SA). This Brucella abortus (strain S19) protein is Shikimate dehydrogenase (NADP(+)).